We begin with the raw amino-acid sequence, 62 residues long: Large ribosomal subunit protein eL24 (62 aa).

C7, C10, C33, and C37 together coordinate Zn(2+). A C4-type zinc finger spans residues 7 to 37 (CSFCGREIEPGTGIMYVKNDGSILWFCSRKC).

The protein belongs to the eukaryotic ribosomal protein eL24 family. As to quaternary structure, part of the 50S ribosomal subunit. Forms a cluster with proteins L3 and L14. Zn(2+) is required as a cofactor.

Functionally, binds to the 23S rRNA. This Staphylothermus marinus (strain ATCC 43588 / DSM 3639 / JCM 9404 / F1) protein is Large ribosomal subunit protein eL24.